A 570-amino-acid polypeptide reads, in one-letter code: MSQTKPRDVQVLPIGTNTTVLRSRSWTRLRFEIEYALAKGTTANSYLIQGDKLALIDPPGETFTQIYLDALQKRLDVTEINYVILGHINPNRAATLKALLEIAPQITFVCSNPGAINLRGVLENPDLPMLIMRGEETLDLGKGHNLQFIPTPNPRYADELCTYDPQTEILYTDKLFGAHICGDQVFDEGWATINEDRRYYYDCLMAPHARQVETALDKLADFPTRLYATGHGPLVRYGLIELTHAYREWSQQQTSADLTVALIYASAYGNTATLAQAIARGITKAGVAVESINCEFADPEEIRAAVEKSAGFVMGSPTLGGHAPTPVQTALGIVLSTATNNKLAGVFGSFGWSGEAVDLIESKLKDAGYRFGFDSIRVKFKPNEVTLQMCEEAGTDFAQALKKARKVRTQSVPATNVEQAVGRIVGSLCVVTAKQGEISSAMLASWVAQASFNPPGLTIAVAKDRAVETLTHTGNKFVLNVLKEGNHLGLMKHFLKPFGPAQDRFADVATAEAENGSPVLQDALAYLECSVQNRMESGDHWLVYATVENGKVLNQDGVTAVHHRKSGNHY.

The tract at residues 38–231 (AKGTTANSYL…FPTRLYATGH (194 aa)) is zinc metallo-hydrolase. In terms of domain architecture, Flavodoxin-like spans 260 to 402 (VALIYASAYG…AGTDFAQALK (143 aa)). Residues 421–570 (VGRIVGSLCV…VHHRKSGNHY (150 aa)) are flavodoxin-reductase-like.

The protein in the N-terminal section; belongs to the zinc metallo-hydrolase group 3 family. In the C-terminal section; belongs to the flavodoxin reductase family. The cofactor is Fe cation.

Its function is as follows. Mediates electron transfer from NADH to oxygen, reducing it to water. This modular protein has 3 redox cofactors, in other organisms the same activity requires 2 or 3 proteins. This Nostoc sp. (strain PCC 7120 / SAG 25.82 / UTEX 2576) protein is Putative diflavin flavoprotein A 6 (dfa6).